The chain runs to 490 residues: ATP synthase subunit alpha 1 (490 aa).

171–178 (GDNGLGKS) is a binding site for ATP.

Belongs to the ATPase alpha/beta chains family. In terms of assembly, F-type ATPases have 2 components, CF(1) - the catalytic core - and CF(0) - the membrane proton channel. CF(1) has five subunits: alpha(3), beta(3), gamma(1), delta(1), epsilon(1). CF(0) has three main subunits: a(1), b(2) and c(9-12). The alpha and beta chains form an alternating ring which encloses part of the gamma chain. CF(1) is attached to CF(0) by a central stalk formed by the gamma and epsilon chains, while a peripheral stalk is formed by the delta and b chains.

Its subcellular location is the cell inner membrane. It carries out the reaction ATP + H2O + 4 H(+)(in) = ADP + phosphate + 5 H(+)(out). Its function is as follows. Produces ATP from ADP in the presence of a proton gradient across the membrane. The alpha chain is a regulatory subunit. This chain is ATP synthase subunit alpha 1, found in Legionella pneumophila (strain Corby).